The sequence spans 53 residues: Unknown protein from 2D-PAGE of needles (53 aa).

The polypeptide is Unknown protein from 2D-PAGE of needles (Pinus pinaster (Maritime pine)).